The sequence spans 95 residues: uncharacterized protein (95 aa).

This is an uncharacterized protein from Enterobacteria phage T4 (Bacteriophage T4).